A 550-amino-acid chain; its full sequence is Hydroxylamine reductase (550 aa).

C3, C6, C18, and C25 together coordinate [2Fe-2S] cluster. Hybrid [4Fe-2O-2S] cluster contacts are provided by H249, E273, C317, C405, C433, C458, E492, and K494. C405 carries the cysteine persulfide modification.

It belongs to the HCP family. The cofactor is [2Fe-2S] cluster. It depends on hybrid [4Fe-2O-2S] cluster as a cofactor.

It localises to the cytoplasm. It carries out the reaction A + NH4(+) + H2O = hydroxylamine + AH2 + H(+). Catalyzes the reduction of hydroxylamine to form NH(3) and H(2)O. The protein is Hydroxylamine reductase of Shigella flexneri serotype 5b (strain 8401).